Reading from the N-terminus, the 255-residue chain is MSELIVSRQQRVLLLTLNRPAARNALNNALLMQLVNELEAAATDTSISVCVITGNARFFAAGADLNEMAEKDLAATLNDTRPQLWARLQAFNKPLIAAVNGYALGAGCELALLCDVVVAGENARFGLPEITLGIMPGAGGTQRLIRSVGKSLASKMVLSGESITAQQAQQAGLVSDVFPSDLTLEYALQLASKMARHSPLALQAAKQALRQSQEVALQAGLAQERQLFTLLAATEDRHEGISAFLQKRTPDFKGR.

Belongs to the enoyl-CoA hydratase/isomerase family.

The enzyme catalyses a (3S)-3-hydroxyacyl-CoA = a (2E)-enoyl-CoA + H2O. It carries out the reaction a 4-saturated-(3S)-3-hydroxyacyl-CoA = a (3E)-enoyl-CoA + H2O. The protein operates within aromatic compound metabolism; phenylacetate degradation. Its function is as follows. Catalyzes the reversible conversion of enzymatically produced 2,3-dehydroadipyl-CoA into 3-hydroxyadipyl-CoA. In Escherichia coli (strain K12), this protein is 2,3-dehydroadipyl-CoA hydratase (paaF).